The chain runs to 42 residues: Protein YmiD (42 aa).

The protein is Protein YmiD of Escherichia coli (strain K12).